Here is a 661-residue protein sequence, read N- to C-terminus: Zeaxanthin epoxidase, chloroplastic (661 aa).

Residues 1-59 (MLLFRATLLPSPPFFHKTYFSHLSPVIFSDDPLPVSLQRNRVSGCRKQKWRQIRTLALQ) constitute a chloroplast transit peptide. Residues 81-109 (RILIAGGGIGGLVLALAAKKKGFDALVFE) and 359-372 (IFTWGKGRVTLLGD) contribute to the FAD site. In terms of domain architecture, FHA spans 555 to 609 (HIIGSISHDDSEGISIHLPFPQVHKTHARIACKDNIFYLTDLQSQYGTWITDNEG).

The cofactor is FAD. As to expression, expressed in flower buds, lips and leaves. Detected in roots.

The protein localises to the plastid. It is found in the chloroplast. It catalyses the reaction all-trans-zeaxanthin + 4 reduced [2Fe-2S]-[ferredoxin] + 2 O2 + 4 H(+) = all-trans-violaxanthin + 4 oxidized [2Fe-2S]-[ferredoxin] + 2 H2O. It participates in plant hormone biosynthesis; abscisate biosynthesis. In terms of biological role, zeaxanthin epoxidase that plays an important role in the xanthophyll cycle and abscisic acid (ABA) biosynthesis. Converts zeaxanthin into antheraxanthin and subsequently violaxanthin. The chain is Zeaxanthin epoxidase, chloroplastic (ZEP) from Oncidium hybrid cultivar (Orchid).